We begin with the raw amino-acid sequence, 307 residues long: Nodulation protein NoeC (307 aa).

8 helical membrane passes run 46–66, 91–111, 117–137, 140–160, 163–183, 212–232, 238–258, and 279–299; these read APLWLAFMTFCSVASGIYVLN, SGLTGVWMCLVLIALGGVCAI, LFAITASYVALSVIYVGKVRG, VLDLFVLSALYTTRILAGATA, IPVPASFLAFSAMAFVSLASI, IVALICVSAGYAAVVFLELFV, AQGPAPIFVSNAMCVVVAYWI, and VTDGSSLVCILGLALGLVFLM.

It localises to the cell membrane. The polypeptide is Nodulation protein NoeC (noeC) (Azorhizobium caulinodans (strain ATCC 43989 / DSM 5975 / JCM 20966 / LMG 6465 / NBRC 14845 / NCIMB 13405 / ORS 571)).